The chain runs to 427 residues: 12-alpha,13-alpha-dihydroxyfumitremorgin C prenyltransferase (427 aa).

A substrate-binding site is contributed by glutamate 94. Dimethylallyl diphosphate is bound by residues arginine 105, lysine 192, tyrosine 194, tyrosine 268, glutamine 353, tyrosine 355, tyrosine 419, and tyrosine 423.

It belongs to the tryptophan dimethylallyltransferase family.

The catalysed reaction is 12alpha,13alpha-dihydroxyfumitremorgin C + dimethylallyl diphosphate = fumitremorgin B + diphosphate. It functions in the pathway mycotoxin biosynthesis. In terms of biological role, 12-alpha,13-alpha-dihydroxyfumitremorgin C prenyltransferase; part of the gene cluster that mediates the biosynthesis of fumitremorgins, indole alkaloids that carry not only intriguing chemical structures, but also interesting biological and pharmacological activities. The biosynthesis of fumitremorgin-type alkaloids begins by condensation of the two amino acids L-tryptophan and L-proline to brevianamide F, catalyzed by the non-ribosomal peptide synthetase ftmA. Brevianamide F is then prenylated by the prenyltransferase ftmPT1/ftmB in the presence of dimethylallyl diphosphate, resulting in the formation of tryprostatin B. The three cytochrome P450 monooxygenases, ftmP450-1/ftmC, ftmP450-2/ftmE and ftmP450-3/FtmG, are responsible for the conversion of tryprostatin B to 6-hydroxytryprostatin B, tryprostatin A to fumitremorgin C and fumitremorgin C to 12,13-dihydroxyfumitremorgin C, respectively. The putative methyltransferase ftmMT/ftmD is expected for the conversion of 6-hydroxytryprostatin B to tryprostatin A. FtmPT2/FtmH catalyzes the prenylation of 12,13-dihydroxyfumitre-morgin C in the presence of dimethylallyl diphosphate, resulting in the formation of fumitremorgin B. Fumitremorgin B is further converted to verruculogen by ftmOx1/ftmF via the insertion of an endoperoxide bond between the two prenyl moieties. In some fungal species, verruculogen is further converted to fumitremorgin A, but the enzymes involved in this step have not been identified yet. The protein is 12-alpha,13-alpha-dihydroxyfumitremorgin C prenyltransferase of Aspergillus fumigatus (Neosartorya fumigata).